The chain runs to 148 residues: Snaclec 8 (148 aa).

Residues 1–23 (MGRFIFVSFSLLVVFFSLSGTEA) form the signal peptide. One can recognise a C-type lectin domain in the interval 34-148 (YDQNCYKAFE…DTQFRLQEPG (115 aa)).

Belongs to the snaclec family. In terms of assembly, heterodimer; disulfide-linked. In terms of processing, contains disulfide bonds. As to expression, expressed by the venom gland.

It is found in the secreted. Its function is as follows. Interferes with one step of hemostasis (modulation of platelet aggregation, or coagulation cascade, for example). In Echis carinatus sochureki (Saw-scaled viper), this protein is Snaclec 8.